A 469-amino-acid chain; its full sequence is Acetyl-CoA decarbonylase/synthase complex subunit beta 1 (469 aa).

C189, C192, C278, and C280 together coordinate [Ni-Fe-S] cluster.

It belongs to the CdhC family. As to quaternary structure, monomer. The ACDS complex is made up of alpha, epsilon, beta, gamma and delta chains with a probable stoichiometry of (alpha(2)epsilon(2))(4)-beta(8)-(gamma(1)delta(1))(8) (Potential). It depends on [Ni-Fe-S] cluster as a cofactor.

It carries out the reaction Co(I)-[corrinoid Fe-S protein] + acetyl-CoA + H(+) = methyl-Co(III)-[corrinoid Fe-S protein] + CO + CoA. Its pathway is one-carbon metabolism; methanogenesis from acetate. In terms of biological role, part of a complex that catalyzes the reversible cleavage of acetyl-CoA, allowing growth on acetate as sole source of carbon and energy. The alpha-epsilon complex generates CO from CO(2), while the beta subunit (this protein) combines the CO with CoA and a methyl group to form acetyl-CoA. The methyl group, which is incorporated into acetyl-CoA, is transferred to the beta subunit by a corrinoid iron-sulfur protein (the gamma-delta complex). The polypeptide is Acetyl-CoA decarbonylase/synthase complex subunit beta 1 (cdhC1) (Methanosarcina thermophila).